Consider the following 384-residue polypeptide: 3,7-dimethylxanthine N-methyltransferase 2 (384 aa).

S-adenosyl-L-homocysteine is bound by residues tyrosine 18, cysteine 61, asparagine 66, aspartate 100, leucine 101, serine 139, phenylalanine 140, and cysteine 156. Theobromine is bound at residue tyrosine 157. Residue cysteine 158 participates in S-adenosyl-L-homocysteine binding. Histidine 160 and tryptophan 161 together coordinate theobromine. Asparagine 178 serves as a coordination point for Mg(2+). Serine 237 is a binding site for theobromine. Mg(2+)-binding residues include aspartate 260, phenylalanine 262, and asparagine 263. Tyrosine 368 is a theobromine binding site.

It belongs to the methyltransferase superfamily. Type-7 methyltransferase family. Requires Mg(2+) as cofactor. Highly expressed in developing endosperm. Detected in young leaves and flower buds. Present in immature fruits (grains), but barely in mature fruits.

The catalysed reaction is 7-methylxanthine + S-adenosyl-L-methionine = theobromine + S-adenosyl-L-homocysteine + H(+). It catalyses the reaction theobromine + S-adenosyl-L-methionine = caffeine + S-adenosyl-L-homocysteine + H(+). The enzyme catalyses 1,7-dimethylxanthine + S-adenosyl-L-methionine = caffeine + S-adenosyl-L-homocysteine + H(+). Its pathway is alkaloid biosynthesis. Involved in the biosynthesis of caffeine. Catalyzes the conversion of 7-methylxanthine (7mX) to theobromine and of theobromine to caffeine. Has 1-N-methylation activity. The protein is 3,7-dimethylxanthine N-methyltransferase 2 of Coffea arabica (Arabian coffee).